A 337-amino-acid polypeptide reads, in one-letter code: MSDLKPFVAKVAAREALSRDDARAAFEIIMSGAATPSQIGGFLMALRVRGETVDEIVGAVGAMRARMLHVKAPDGSIDIVGTGGDGAGTYNISTLAALIVAGAGVPVAKHGNRALSSKSGTADALSCLGVNLEIGPEAISRCIGEAGLGFMFAQQHHSAMRHVGPTRVELGTRTIFNLLGPLANPAGVRQQLVGVYAPQWVDPLAEVLRDLGSESVWVVHGEGLDEITTTGVTKVAALKDGTITNFELTPADFGLERVTLDALKGGDGAHNAAALQAVLDGAENAYRDISLANAAASLMIAGRAKDLMEGMDLARKSLSSGAAKVALQRLITVSNAA.

5-phospho-alpha-D-ribose 1-diphosphate is bound by residues G81, 84–85 (GD), T89, 91–94 (NIST), 109–117 (KHGNRALSS), and T121. G81 is an anthranilate binding site. Mg(2+) is bound at residue S93. N112 contributes to the anthranilate binding site. Residue R167 coordinates anthranilate. Residues D225 and E226 each coordinate Mg(2+).

It belongs to the anthranilate phosphoribosyltransferase family. As to quaternary structure, homodimer. Mg(2+) serves as cofactor.

The enzyme catalyses N-(5-phospho-beta-D-ribosyl)anthranilate + diphosphate = 5-phospho-alpha-D-ribose 1-diphosphate + anthranilate. It functions in the pathway amino-acid biosynthesis; L-tryptophan biosynthesis; L-tryptophan from chorismate: step 2/5. Its function is as follows. Catalyzes the transfer of the phosphoribosyl group of 5-phosphorylribose-1-pyrophosphate (PRPP) to anthranilate to yield N-(5'-phosphoribosyl)-anthranilate (PRA). This Sinorhizobium medicae (strain WSM419) (Ensifer medicae) protein is Anthranilate phosphoribosyltransferase.